The chain runs to 605 residues: Replication and transcription activator (605 aa).

2 disordered regions span residues 307 to 381 and 447 to 501; these read SLPS…EPEQ and RIRP…TPEA. Residues 321-338 show a composition bias toward low complexity; it reads SADCGDSSSSSSDSGNSD. Basic and acidic residues predominate over residues 341-353; sequence QSEREEARAEAPR. Basic residues predominate over residues 355–364; sequence RAPKSRRTSR.

The protein belongs to the herpesviridae Rta family. As to quaternary structure, interacts with human ATF7IP protein, leading to promote and regulate host genes in virus-infected cells. Interacts with RNA polymerase III complex; this interaction downregulates small RNA transcription and 5'-pppRNA production.

The protein resides in the host nucleus. It is found in the virion tegument. Its function is as follows. Immediate-early transcription factor that controls the initiation of viral lytic gene expression and lytic reactivation from latency. Triggers lytic replication, and initiates a cellular senescence program in epithelial cells. Up-regulates human DCR3/TNFRSF6B by directly binding to its receptor. Globally induces a proteasome-dependent loss of SUMOylated proteins in the host cell and the loss of promeylocytic leukemia nuclear bodies. Improves the stability of the triplex capsid protein TRX1 by reducing the ubiquitination level of the latter. Mediates evasion of inflammasome activation and antiviral responses (T- and NK cell activation) during EBV early lytic infection. The polypeptide is Replication and transcription activator (Epstein-Barr virus (strain GD1) (HHV-4)).